We begin with the raw amino-acid sequence, 686 residues long: Polyribonucleotide nucleotidyltransferase (686 aa).

Positions 478 and 484 each coordinate Mg(2+). A KH domain is found at 545–604 (PRVEVIQIPTDKIGLLIGPGGKTINALQDEYGVNISVENDGTVYVAGVEGMSVKAAVSAI). Residues 614–684 (GDIYVGKVVK…KQNRISLEMV (71 aa)) enclose the S1 motif domain.

The protein belongs to the polyribonucleotide nucleotidyltransferase family. Requires Mg(2+) as cofactor.

It is found in the cytoplasm. It carries out the reaction RNA(n+1) + phosphate = RNA(n) + a ribonucleoside 5'-diphosphate. Functionally, involved in mRNA degradation. Catalyzes the phosphorolysis of single-stranded polyribonucleotides processively in the 3'- to 5'-direction. In Rubrobacter xylanophilus (strain DSM 9941 / JCM 11954 / NBRC 16129 / PRD-1), this protein is Polyribonucleotide nucleotidyltransferase.